A 320-amino-acid chain; its full sequence is 3-O-acetylpapaveroxine carboxylesterase CXE1 (320 aa).

The short motif at 72–74 (HGG) is the Involved in the stabilization of the negatively charged intermediate by the formation of the oxyanion hole element. Active-site residues include S158, D262, and H292.

Belongs to the 'GDXG' lipolytic enzyme family.

The enzyme catalyses 3-O-acetylpapaveroxine + H2O = narcotine hemiacetal + acetate + H(+). The protein operates within alkaloid biosynthesis. Its function is as follows. Carboxylesterase involved in the biosynthesis of the benzylisoquinoline alkaloid noscapine. Converts 3-O-acetylpapaveroxine to papaveroxine which spontaneously rearranges to narcotine hemiacetal. The protein is 3-O-acetylpapaveroxine carboxylesterase CXE1 of Papaver somniferum (Opium poppy).